A 473-amino-acid polypeptide reads, in one-letter code: H(+)/Cl(-) exchange transporter ClcA (473 aa).

The Cytoplasmic portion of the chain corresponds to 1–32 (MKTDTPTFEAQQIVRLRRGRLIRRLVQRDKTP). A helical transmembrane segment spans residues 33 to 69 (LAILLMAAVVGTLTGLVGVAFEKAVSWVQNMRIGALV). Residues 70–76 (QVADHAF) are Periplasmic-facing. The chain crosses the membrane as a helical span at residues 77-100 (LLWPLAFILSALLAMVGYFLVRKF). Residues 106–110 (GSGIP) carry the Selectivity filter part_1 motif. Residue S107 coordinates chloride. Residues 109–116 (IPEIEGAL) constitute an intramembrane region (helical). Residues 117–123 (EELRPVR) are Cytoplasmic-facing. 2 helical membrane-spanning segments follow: residues 124 to 141 (WWRVLPVKFIGGMGTLGA) and 148 to 166 (EGPTVQIGGNLGRMVLDVF). A Selectivity filter part_2 motif is present at residues 146–150 (GREGP). Residues 167–176 (RMRSAEARHT) lie on the Cytoplasmic side of the membrane. 2 consecutive intramembrane regions (helical) follow at residues 177–189 (LLATGAAAGLSAA) and 193–201 (PLAGILFII). The Cytoplasmic portion of the chain corresponds to 202–214 (EEMRPQFRYNLIS). A helical transmembrane segment spans residues 215 to 232 (IKAVFTGVIMSSIVFRIF). The Periplasmic segment spans residues 233–252 (NGEAPIIEVGKLSNAPVNTL). Residues 253–281 (WLYLVLGIIFGCVGPVFNTLVLRTQDMFQ) form a helical membrane-spanning segment. Over 282-287 (RFHGGE) the chain is Cytoplasmic. Residues 288–309 (IKKWVLMGGAIGGLCGILGLIE) form a helical membrane-spanning segment. Topologically, residues 310-329 (PEAAGGGFNLIPIAAAGNFS) are periplasmic. The next 2 membrane-spanning stretches (helical) occupy residues 330–349 (VGLLLFIFITRVVTTLLCFS) and 355–376 (GIFAPMLALGTLLGTAFGMAAA). The short motif at 355–359 (GIFAP) is the Selectivity filter part_3 element. Residues I356 and F357 each contribute to the chloride site. Topologically, residues 377-386 (VLFPQYHLEA) are periplasmic. Residues 387 to 401 (GTFAIAGMGALMAAS) constitute an intramembrane region (helical). An intramembrane region (note=Loop between two helices) is located at residues 402-404 (VRA). Positions 405–416 (PLTGIVLVLEMT) form an intramembrane region, helical. An intramembrane region (note=Loop between two helices) is located at residues 417-421 (DNYQL). Residues 422–438 (ILPMIITCLGATLLAQF) traverse the membrane as a helical segment. At 439–473 (LGGKPLYSTILARTLAKQDAEQAAKNQSTPAGENT) the chain is on the cytoplasmic side. Y445 is a binding site for chloride.

This sequence belongs to the chloride channel (TC 2.A.49) family. ClcA subfamily. In terms of assembly, homodimer.

It localises to the cell inner membrane. The catalysed reaction is 2 chloride(in) + H(+)(out) = 2 chloride(out) + H(+)(in). Proton-coupled chloride transporter. Functions as antiport system and exchanges two chloride ions for 1 proton. Probably acts as an electrical shunt for an outwardly-directed proton pump that is linked to amino acid decarboxylation, as part of the extreme acid resistance (XAR) response. This Salmonella arizonae (strain ATCC BAA-731 / CDC346-86 / RSK2980) protein is H(+)/Cl(-) exchange transporter ClcA.